Here is a 396-residue protein sequence, read N- to C-terminus: Cytochrome b (396 aa).

The next 4 helical transmembrane spans lie at phenylalanine 37–methionine 57, tryptophan 81–isoleucine 102, tryptophan 117–leucine 137, and phenylalanine 182–methionine 202. 2 residues coordinate heme b: histidine 87 and histidine 101. Heme b-binding residues include histidine 186 and histidine 200. Residue histidine 205 participates in a ubiquinone binding. The next 4 membrane-spanning stretches (helical) occupy residues phenylalanine 230–alanine 250, leucine 292–histidine 312, leucine 324–glycine 344, and phenylalanine 351–proline 371.

It belongs to the cytochrome b family. As to quaternary structure, the cytochrome bc1 complex contains 3 respiratory subunits (MT-CYB, CYC1 and UQCRFS1), 2 core proteins (UQCRC1 and UQCRC2) and probably 6 low-molecular weight proteins. Heme b serves as cofactor.

It localises to the mitochondrion inner membrane. Functionally, component of the ubiquinol-cytochrome c reductase complex (complex III or cytochrome b-c1 complex) that is part of the mitochondrial respiratory chain. The b-c1 complex mediates electron transfer from ubiquinol to cytochrome c. Contributes to the generation of a proton gradient across the mitochondrial membrane that is then used for ATP synthesis. This chain is Cytochrome b (mt-cyb), found in Petromyzon marinus (Sea lamprey).